A 194-amino-acid chain; its full sequence is Xanthine phosphoribosyltransferase (194 aa).

Xanthine contacts are provided by L20 and N27. Position 128-132 (128-132) interacts with 5-phospho-alpha-D-ribose 1-diphosphate; that stretch reads ANGCA. K156 provides a ligand contact to xanthine.

The protein belongs to the purine/pyrimidine phosphoribosyltransferase family. Xpt subfamily. Homodimer.

Its subcellular location is the cytoplasm. It catalyses the reaction XMP + diphosphate = xanthine + 5-phospho-alpha-D-ribose 1-diphosphate. The protein operates within purine metabolism; XMP biosynthesis via salvage pathway; XMP from xanthine: step 1/1. In terms of biological role, converts the preformed base xanthine, a product of nucleic acid breakdown, to xanthosine 5'-monophosphate (XMP), so it can be reused for RNA or DNA synthesis. This chain is Xanthine phosphoribosyltransferase, found in Lachnoclostridium phytofermentans (strain ATCC 700394 / DSM 18823 / ISDg) (Clostridium phytofermentans).